Consider the following 353-residue polypeptide: Melanin-concentrating hormone receptor 1 (353 aa).

The interval 1 to 31 (MDLEASLLPTGPNTSNTSDGPDNLTSAGSPP) is disordered. Residues 1 to 45 (MDLEASLLPTGPNTSNTSDGPDNLTSAGSPPRSGSVSYINIIMPS) are Extracellular-facing. Residues 11 to 31 (GPNTSNTSDGPDNLTSAGSPP) show a composition bias toward polar residues. N-linked (GlcNAc...) asparagine glycans are attached at residues N13, N16, and N23. A helical transmembrane segment spans residues 46–66 (VFGTICLLGIIGNSMVIFAVV). The Cytoplasmic segment spans residues 67–79 (KKSKLHWCNNVPD). Residues 80–100 (IFIINLSVVDLLFLLGMPFMI) form a helical membrane-spanning segment. The Extracellular segment spans residues 101–118 (HQLMGNGVWHFGETMCTL). An intrachain disulfide couples C116 to C194. The helical transmembrane segment at 119–139 (ITAMDANSQFTSTYILTAMAI) threads the bilayer. Residues 140-161 (DRYLATVHPISSTKFRKPSVAT) lie on the Cytoplasmic side of the membrane. The chain crosses the membrane as a helical span at residues 162–182 (LVICLLWALSFISITPVWLYA). At 183-204 (RLIPFPGGAVGCGIRLPNPDTD) the chain is on the extracellular side. A helical membrane pass occupies residues 205–225 (LYWFTLYQFFLAFALPFVVIT). Over 226-257 (AAYVRILQRMTSSVAPASQRSIRLRTKRVTRT) the chain is Cytoplasmic. The chain crosses the membrane as a helical span at residues 258–278 (AIAICLVFFVCWAPYYVLQLT). Over 279–294 (QLSISRPTLTFVYLYN) the chain is Extracellular. The helical transmembrane segment at 295–315 (AAISLGYANSCLNPFVYIVLC) threads the bilayer. Topologically, residues 316 to 353 (ETFRKRLVLSVKPAAQGQLRAVSNAQTADEERTESKGT) are cytoplasmic.

This sequence belongs to the G-protein coupled receptor 1 family. Interacts with NCDN.

The protein localises to the cell membrane. In terms of biological role, receptor for melanin-concentrating hormone, coupled to both G proteins that inhibit adenylyl cyclase and G proteins that activate phosphoinositide hydrolysis. The chain is Melanin-concentrating hormone receptor 1 from Macaca mulatta (Rhesus macaque).